We begin with the raw amino-acid sequence, 575 residues long: 2-isopropylmalate synthase (575 aa).

A Pyruvate carboxyltransferase domain is found at 31–305 (PTWLSTDLRD…APGLDFSDIA (275 aa)). 4 residues coordinate Mg(2+): Asp-40, His-244, His-246, and Asn-280. The interval 437–575 (PVQASPDFSD…RFAGEEQGKG (139 aa)) is regulatory domain.

It belongs to the alpha-IPM synthase/homocitrate synthase family. LeuA type 2 subfamily. As to quaternary structure, homodimer. The cofactor is Mg(2+).

Its subcellular location is the cytoplasm. It carries out the reaction 3-methyl-2-oxobutanoate + acetyl-CoA + H2O = (2S)-2-isopropylmalate + CoA + H(+). The protein operates within amino-acid biosynthesis; L-leucine biosynthesis; L-leucine from 3-methyl-2-oxobutanoate: step 1/4. Its function is as follows. Catalyzes the condensation of the acetyl group of acetyl-CoA with 3-methyl-2-oxobutanoate (2-ketoisovalerate) to form 3-carboxy-3-hydroxy-4-methylpentanoate (2-isopropylmalate). In Herbaspirillum seropedicae (strain SmR1), this protein is 2-isopropylmalate synthase.